Consider the following 161-residue polypeptide: Crossover junction endodeoxyribonuclease RuvC (161 aa).

Catalysis depends on residues D9, E72, and D144. Mg(2+) contacts are provided by D9, E72, and D144.

Belongs to the RuvC family. As to quaternary structure, homodimer which binds Holliday junction (HJ) DNA. The HJ becomes 2-fold symmetrical on binding to RuvC with unstacked arms; it has a different conformation from HJ DNA in complex with RuvA. In the full resolvosome a probable DNA-RuvA(4)-RuvB(12)-RuvC(2) complex forms which resolves the HJ. Requires Mg(2+) as cofactor.

The protein localises to the cytoplasm. It carries out the reaction Endonucleolytic cleavage at a junction such as a reciprocal single-stranded crossover between two homologous DNA duplexes (Holliday junction).. Functionally, the RuvA-RuvB-RuvC complex processes Holliday junction (HJ) DNA during genetic recombination and DNA repair. Endonuclease that resolves HJ intermediates. Cleaves cruciform DNA by making single-stranded nicks across the HJ at symmetrical positions within the homologous arms, yielding a 5'-phosphate and a 3'-hydroxyl group; requires a central core of homology in the junction. The consensus cleavage sequence is 5'-(A/T)TT(C/G)-3'. Cleavage occurs on the 3'-side of the TT dinucleotide at the point of strand exchange. HJ branch migration catalyzed by RuvA-RuvB allows RuvC to scan DNA until it finds its consensus sequence, where it cleaves and resolves the cruciform DNA. The sequence is that of Crossover junction endodeoxyribonuclease RuvC from Synechococcus sp. (strain ATCC 27144 / PCC 6301 / SAUG 1402/1) (Anacystis nidulans).